The primary structure comprises 106 residues: Toxin-like structure LSTX-D8 (106 aa).

The signal sequence occupies residues 1–20; it reads MTKVLVVVALLVTLISYSSS. The propeptide occupies 21-41; the sequence is EGIDDLEADELLSLMANEQTR. 4 disulfides stabilise this stretch: Cys-45–Cys-60, Cys-52–Cys-69, Cys-59–Cys-85, and Cys-71–Cys-83.

Belongs to the neurotoxin 19 (CSTX) family. 02 (D7) subfamily. As to expression, expressed by the venom gland.

It is found in the secreted. The polypeptide is Toxin-like structure LSTX-D8 (Lycosa singoriensis (Wolf spider)).